The chain runs to 194 residues: Peptidyl-tRNA hydrolase (194 aa).

Tyr-16 provides a ligand contact to tRNA. Catalysis depends on His-21, which acts as the Proton acceptor. Residues Phe-67, Asn-69, and Asn-115 each contribute to the tRNA site.

This sequence belongs to the PTH family. In terms of assembly, monomer.

The protein resides in the cytoplasm. It carries out the reaction an N-acyl-L-alpha-aminoacyl-tRNA + H2O = an N-acyl-L-amino acid + a tRNA + H(+). Its function is as follows. Hydrolyzes ribosome-free peptidyl-tRNAs (with 1 or more amino acids incorporated), which drop off the ribosome during protein synthesis, or as a result of ribosome stalling. In terms of biological role, catalyzes the release of premature peptidyl moieties from peptidyl-tRNA molecules trapped in stalled 50S ribosomal subunits, and thus maintains levels of free tRNAs and 50S ribosomes. The chain is Peptidyl-tRNA hydrolase from Shigella flexneri.